The following is a 297-amino-acid chain: Light-independent protochlorophyllide reductase iron-sulfur ATP-binding protein (297 aa).

ATP contacts are provided by residues 41 to 46 and Lys-70; that span reads GIGKST. Ser-45 lines the Mg(2+) pocket. Positions 126 and 160 each coordinate [4Fe-4S] cluster. ATP contacts are provided by residues 211-212 and 235-237; these read NR and PDL.

The protein belongs to the NifH/BchL/ChlL family. As to quaternary structure, homodimer. Protochlorophyllide reductase is composed of three subunits; BchL, BchN and BchB. Requires [4Fe-4S] cluster as cofactor.

It catalyses the reaction chlorophyllide a + oxidized 2[4Fe-4S]-[ferredoxin] + 2 ADP + 2 phosphate = protochlorophyllide a + reduced 2[4Fe-4S]-[ferredoxin] + 2 ATP + 2 H2O. It participates in porphyrin-containing compound metabolism; bacteriochlorophyll biosynthesis (light-independent). Its function is as follows. Component of the dark-operative protochlorophyllide reductase (DPOR) that uses Mg-ATP and reduced ferredoxin to reduce ring D of protochlorophyllide (Pchlide) to form chlorophyllide a (Chlide). This reaction is light-independent. The L component serves as a unique electron donor to the NB-component of the complex, and binds Mg-ATP. This Methylobacterium radiotolerans (strain ATCC 27329 / DSM 1819 / JCM 2831 / NBRC 15690 / NCIMB 10815 / 0-1) protein is Light-independent protochlorophyllide reductase iron-sulfur ATP-binding protein.